The primary structure comprises 72 residues: Large ribosomal subunit protein bL31 (72 aa).

This sequence belongs to the bacterial ribosomal protein bL31 family. Type A subfamily. Part of the 50S ribosomal subunit.

In terms of biological role, binds the 23S rRNA. The polypeptide is Large ribosomal subunit protein bL31 (Deinococcus deserti (strain DSM 17065 / CIP 109153 / LMG 22923 / VCD115)).